The following is a 61-amino-acid chain: Small ribosomal subunit protein uS14B (61 aa).

Cys24, Cys27, Cys40, and Cys43 together coordinate Zn(2+).

This sequence belongs to the universal ribosomal protein uS14 family. Zinc-binding uS14 subfamily. Part of the 30S ribosomal subunit. Contacts proteins S3 and S10. Zn(2+) serves as cofactor.

Functionally, binds 16S rRNA, required for the assembly of 30S particles and may also be responsible for determining the conformation of the 16S rRNA at the A site. This Saccharopolyspora erythraea (strain ATCC 11635 / DSM 40517 / JCM 4748 / NBRC 13426 / NCIMB 8594 / NRRL 2338) protein is Small ribosomal subunit protein uS14B.